Reading from the N-terminus, the 273-residue chain is 2,3,4,5-tetrahydropyridine-2,6-dicarboxylate N-succinyltransferase (273 aa).

Belongs to the transferase hexapeptide repeat family.

The protein localises to the cytoplasm. It carries out the reaction (S)-2,3,4,5-tetrahydrodipicolinate + succinyl-CoA + H2O = (S)-2-succinylamino-6-oxoheptanedioate + CoA. It participates in amino-acid biosynthesis; L-lysine biosynthesis via DAP pathway; LL-2,6-diaminopimelate from (S)-tetrahydrodipicolinate (succinylase route): step 1/3. The chain is 2,3,4,5-tetrahydropyridine-2,6-dicarboxylate N-succinyltransferase from Acinetobacter baumannii (strain AB307-0294).